A 362-amino-acid chain; its full sequence is Probable endopolygalacturonase B (362 aa).

Positions 1-20 (MHFLQNAFVAATMGAAPAAA) are cleaved as a signal peptide. The propeptide occupies 21-25 (TPLEK). A disulfide bridge links C28 with C43. PbH1 repeat units follow at residues 155-184 (ADHLTITDVTIDDSAGTSKGHNTDAFDIGQ), 185-206 (STYITIDGATVYNQDDCLAINS), 207-227 (GEHITFTNGYCDGGHGLSIGS), 236-257 (VNDVTISNSKVVNSQNGVRIKT), 265-287 (VENVKFEDITLSDISKYGIVVEQ), and 299-344 (TNGV…DVTG). D199 serves as the catalytic Proton donor. A disulfide bond links C201 and C217. H221 is a catalytic residue. Cysteines 327 and 332 form a disulfide. N-linked (GlcNAc...) asparagine glycosylation is present at N334. An intrachain disulfide couples C351 to C360.

This sequence belongs to the glycosyl hydrolase 28 family.

It is found in the secreted. The enzyme catalyses (1,4-alpha-D-galacturonosyl)n+m + H2O = (1,4-alpha-D-galacturonosyl)n + (1,4-alpha-D-galacturonosyl)m.. Functionally, involved in maceration and soft-rotting of plant tissue. Hydrolyzes the 1,4-alpha glycosidic bonds of de-esterified pectate in the smooth region of the plant cell wall. The protein is Probable endopolygalacturonase B (pgaB) of Aspergillus kawachii (White koji mold).